Consider the following 202-residue polypeptide: LexA repressor (202 aa).

The segment at residues arginine 28–lysine 48 is a DNA-binding region (H-T-H motif). Residues serine 119 and lysine 156 each act as for autocatalytic cleavage activity in the active site.

Belongs to the peptidase S24 family. As to quaternary structure, homodimer.

The enzyme catalyses Hydrolysis of Ala-|-Gly bond in repressor LexA.. Its function is as follows. Represses a number of genes involved in the response to DNA damage (SOS response), including recA and lexA. Binds to the 16 bp palindromic sequence 5'-CTGTATATATATACAG-3'. In the presence of single-stranded DNA, RecA interacts with LexA causing an autocatalytic cleavage which disrupts the DNA-binding part of LexA, leading to derepression of the SOS regulon and eventually DNA repair. This Sodalis glossinidius (strain morsitans) protein is LexA repressor.